A 271-amino-acid polypeptide reads, in one-letter code: MDTFTSAVKINWFPGHMKKTHDQLKKLASSLDGVIEVVDARAPTLTQNPEITAYFTNKPKLTLALKADLAQTVANSNILWGTLKQGLQLKRLVIKKLQTLFQAKKNQLKAKGLLVHQFRLAVIGMPNVGKSSLINLLLNKNHLQVANRAGVTKSMSWNQISSEFYLSDTPGVFFKRIDEMAVGYKLVLTNVIKREVVPLEDVGAFAFCYLSKHYPQLLPYEGTDFTEFLHKFAISRKLLQKSNQLNINLACELFVSELINGKYGKLSFELD.

The CP-type G domain occupies 21-175; the sequence is HDQLKKLASS…LSDTPGVFFK (155 aa). GTP is bound by residues 127–132 and glycine 171; that span reads NVGKSS.

Belongs to the TRAFAC class YlqF/YawG GTPase family. MTG1 subfamily.

The protein resides in the cytoplasm. In terms of biological role, required for a late step of 50S ribosomal subunit assembly. Has GTPase activity. Binds to the 23S rRNA. This chain is Probable ribosome biogenesis GTPase A (rbgA), found in Mycoplasma pneumoniae (strain ATCC 29342 / M129 / Subtype 1) (Mycoplasmoides pneumoniae).